The chain runs to 125 residues: uncharacterized protein (125 aa).

To transposase of insertion sequence IS6501.

This is an uncharacterized protein from Sinorhizobium fredii (strain NBRC 101917 / NGR234).